The following is a 241-amino-acid chain: DNA repair protein RecO (241 aa).

The protein belongs to the RecO family.

In terms of biological role, involved in DNA repair and RecF pathway recombination. The sequence is that of DNA repair protein RecO from Phocaeicola vulgatus (strain ATCC 8482 / DSM 1447 / JCM 5826 / CCUG 4940 / NBRC 14291 / NCTC 11154) (Bacteroides vulgatus).